The following is a 456-amino-acid chain: F-box/FBD/LRR-repeat protein At1g13780 (456 aa).

The region spanning 9 to 55 (FDRISELPESLISQILLHLPTKASVKTSVLSTRWKNLWLNVPGLDLN) is the F-box domain. 4 LRR repeats span residues 197-220 (LEELIYLHDDKLVVTRVRSRSLKR), 243-266 (APGLEYMSLKADHFDRIVVKNLTS), 302-325 (ISSVRHMVISHNTVKALDLYSKVG), and 355-379 (FPNLKHLILETECPVEVMEKFELVN). Residues 372–424 (MEKFELVNVPRCFVSTLEHVEIKGLFDWGEQDMKIASYFLENSAVLKKLILSF) form the FBD domain.

The sequence is that of F-box/FBD/LRR-repeat protein At1g13780 from Arabidopsis thaliana (Mouse-ear cress).